Here is a 435-residue protein sequence, read N- to C-terminus: Cyclin-dependent kinase 14 (435 aa).

Residues 75–92 (RTQSSFDPFEKTSNQPTS) are compositionally biased toward polar residues. Residues 75 to 97 (RTQSSFDPFEKTSNQPTSPKFGK) form a disordered region. Positions 101–385 (YEKLEKLGEG…AQAALNHDYF (285 aa)) constitute a Protein kinase domain. ATP is bound by residues 107–115 (LGEGSYATV) and Lys130. The active-site Proton acceptor is Asp222.

It belongs to the protein kinase superfamily. CMGC Ser/Thr protein kinase family. CDC2/CDKX subfamily. As to quaternary structure, interacts with ccny; ccny mediates its recruitment to the plasma membrane and promotes phosphorylation of lrp6.

The protein localises to the cell membrane. The enzyme catalyses L-seryl-[protein] + ATP = O-phospho-L-seryl-[protein] + ADP + H(+). The catalysed reaction is L-threonyl-[protein] + ATP = O-phospho-L-threonyl-[protein] + ADP + H(+). Functionally, serine/threonine-protein kinase involved in the control of the eukaryotic cell cycle, whose activity is controlled by an associated cyclin. Acts as a cell-cycle regulator of Wnt signaling pathway during G2/M phase by mediating the phosphorylation of lrp6, leading to the activation of the Wnt signaling pathway. The chain is Cyclin-dependent kinase 14 (cdk14) from Xenopus laevis (African clawed frog).